The following is an 830-amino-acid chain: Periplasmic nitrate reductase (830 aa).

Positions 1–31 form a signal peptide, tat-type signal; the sequence is MKLSRRDFMKANAAVAAAAAAGMTIPTVAKA. The 4Fe-4S Mo/W bis-MGD-type domain occupies 39–95; it reads IKWDKAPCRFCGTGCGVLVGTQNGRIVASQGDPDSPVNRGLNCIKGYFLPKIMYGKD. Residues cysteine 46, cysteine 49, cysteine 53, and cysteine 81 each contribute to the [4Fe-4S] cluster site. Residues lysine 83, glutamine 150, asparagine 175, cysteine 179, 212–219, 243–247, 262–264, methionine 372, glutamine 376, asparagine 482, 508–509, lysine 531, aspartate 558, and 718–727 contribute to the Mo-bis(molybdopterin guanine dinucleotide) site; these read WGSNMAEM, STYEH, QTD, SD, and TGRVLEHWHT. A substrate-binding site is contributed by phenylalanine 794. Mo-bis(molybdopterin guanine dinucleotide)-binding residues include asparagine 802 and lysine 819.

This sequence belongs to the prokaryotic molybdopterin-containing oxidoreductase family. NasA/NapA/NarB subfamily. In terms of assembly, component of the periplasmic nitrate reductase NapAB complex composed of NapA and NapB. It depends on [4Fe-4S] cluster as a cofactor. Mo-bis(molybdopterin guanine dinucleotide) is required as a cofactor. In terms of processing, predicted to be exported by the Tat system. The position of the signal peptide cleavage has not been experimentally proven.

Its subcellular location is the periplasm. It carries out the reaction 2 Fe(II)-[cytochrome] + nitrate + 2 H(+) = 2 Fe(III)-[cytochrome] + nitrite + H2O. Functionally, catalytic subunit of the periplasmic nitrate reductase complex NapAB. Receives electrons from NapB and catalyzes the reduction of nitrate to nitrite. This chain is Periplasmic nitrate reductase, found in Yersinia pseudotuberculosis serotype IB (strain PB1/+).